Here is a 550-residue protein sequence, read N- to C-terminus: MARKGNPISVRLDLNRSSDSSWFSDYYYGKSVYQDVNLRSYFGSIRPPTRLTFGFRLGRCIILHFPKRTFIHFFLPRRPRRLKRGKKSRPGKEKARWWEFGKVGPIGCLHSNDDTEEERNEVGGRGAGKRVESIRLDDREKQNEIRIWPKKKQGYGYHDRSPSIKKNLSKSLRVSGAFKHPKYAGVLNDIAFLIENDDSFRKTKLFKFFFPKKSRSDGPTSHLLKRTPPAVRPSLNYSVMQYYLNTKNQMHFDPLVVLNHFVAPGVAEPSTMGGANRQGRSNELRIRSRIAFFVESSTSEKKSLAEDKKGLPHFIRQENDLRFAGRTKTTISLFPFFGATFFFPRDGVGVYKHLFFEDAREQLLGQLRIKCWKLMGKDKVMELIEKFIDLGGIGELIKGIEIMIEIILRNRRIPYGYNSYLNEVKKMRSLLSNRTKTNTIIESVKIKSVYQSASPIAQDISFQPRNKRRSFRSIFSQIVKDIPLVMKKGVEGIRICCSGRSKGAEIARTECGKYGKTSRNVFNQKIDYAPAEVSTRYGILGVKVWISYSK.

The segment at 112-133 (NDDTEEERNEVGGRGAGKRVES) is disordered.

This sequence belongs to the universal ribosomal protein uS3 family.

Its subcellular location is the mitochondrion. The protein is Small ribosomal subunit protein uS3m (RPS3) of Oenothera berteroana (Bertero's evening primrose).